The primary structure comprises 274 residues: Bis(5'-nucleosyl)-tetraphosphatase, symmetrical (274 aa).

The protein belongs to the Ap4A hydrolase family.

It catalyses the reaction P(1),P(4)-bis(5'-adenosyl) tetraphosphate + H2O = 2 ADP + 2 H(+). Hydrolyzes diadenosine 5',5'''-P1,P4-tetraphosphate to yield ADP. This Shewanella sp. (strain ANA-3) protein is Bis(5'-nucleosyl)-tetraphosphatase, symmetrical.